The primary structure comprises 1594 residues: NAD-specific glutamate dehydrogenase (1594 aa).

The active site involves lysine 816.

This sequence belongs to the Glu/Leu/Phe/Val dehydrogenases family. As to quaternary structure, interacts with (unphosphorylated) GarA.

The catalysed reaction is L-glutamate + NAD(+) + H2O = 2-oxoglutarate + NH4(+) + NADH + H(+). Its activity is regulated as follows. Activity is inhibited by unphosphorylated GarA. Stimulated by manganese and magnesium. In terms of biological role, catalyzes the reversible conversion of L-glutamate to 2-oxoglutarate. Highly specific for NAD. This is NAD-specific glutamate dehydrogenase (gdh) from Mycolicibacterium smegmatis (strain ATCC 700084 / mc(2)155) (Mycobacterium smegmatis).